Reading from the N-terminus, the 646-residue chain is Chaperone protein DnaK (646 aa).

T198 carries the phosphothreonine; by autocatalysis modification. Residues 603–646 (EQAQQAGGAEGFDPNAFQGGDAGQQKADDGVVDAEFTEVKDDKK) form a disordered region. The segment covering 618-627 (AFQGGDAGQQ) has biased composition (low complexity).

It belongs to the heat shock protein 70 family.

Its function is as follows. Acts as a chaperone. In Acinetobacter baumannii (strain ACICU), this protein is Chaperone protein DnaK.